Reading from the N-terminus, the 264-residue chain is Ribosomal protein L11 methyltransferase (264 aa).

S-adenosyl-L-methionine-binding residues include Thr-116, Gly-137, Asp-159, and Asn-200.

Belongs to the methyltransferase superfamily. PrmA family.

It is found in the cytoplasm. It carries out the reaction L-lysyl-[protein] + 3 S-adenosyl-L-methionine = N(6),N(6),N(6)-trimethyl-L-lysyl-[protein] + 3 S-adenosyl-L-homocysteine + 3 H(+). Functionally, methylates ribosomal protein L11. This is Ribosomal protein L11 methyltransferase from Thermotoga petrophila (strain ATCC BAA-488 / DSM 13995 / JCM 10881 / RKU-1).